The primary structure comprises 158 residues: 3-dehydroquinate dehydratase (158 aa).

Tyr-24 serves as the catalytic Proton acceptor. Positions 75, 81, and 88 each coordinate substrate. His-101 serves as the catalytic Proton donor. Residues Leu-102–Ser-103 and Arg-112 each bind substrate.

It belongs to the type-II 3-dehydroquinase family. Homododecamer.

The catalysed reaction is 3-dehydroquinate = 3-dehydroshikimate + H2O. The protein operates within metabolic intermediate biosynthesis; chorismate biosynthesis; chorismate from D-erythrose 4-phosphate and phosphoenolpyruvate: step 3/7. Catalyzes a trans-dehydration via an enolate intermediate. The chain is 3-dehydroquinate dehydratase from Bartonella bacilliformis (strain ATCC 35685 / KC583 / Herrer 020/F12,63).